The chain runs to 192 residues: Ras-like protein 2 (192 aa).

A GTP-binding site is contributed by 12–19; it reads GGGGVGKS. The Effector region motif lies at 34-42; that stretch reads YDPTIEDSY. C46 is lipidated: S-palmitoyl cysteine. Residues 59–63 and 118–121 contribute to the GTP site; these read DTAGQ and NKCD. S-palmitoyl cysteine attachment occurs at residues C120 and C147. Cysteine methyl ester is present on C189. C189 carries the S-farnesyl cysteine lipid modification. A propeptide spans 190–192 (removed in mature form); that stretch reads CLM.

The protein belongs to the small GTPase superfamily. Ras family. Interacts with hzg.

It localises to the cell membrane. It carries out the reaction GTP + H2O = GDP + phosphate + H(+). Alternates between an inactive form bound to GDP and an active form bound to GTP. Activated by a guanine nucleotide-exchange factor (GEF) and inactivated by a GTPase-activating protein (GAP). In terms of biological role, may be involved in endocytic processes and/or other transport pathways mediated by vesicle trafficking. May interact functionally with ROP protein. Ras proteins bind GDP/GTP and possess intrinsic GTPase activity. In Drosophila melanogaster (Fruit fly), this protein is Ras-like protein 2 (Ras64B).